We begin with the raw amino-acid sequence, 394 residues long: Elongation factor Tu (394 aa).

The region spanning 10–204 is the tr-type G domain; it reads KPHINVGTIG…YLDTYIPEPK (195 aa). The tract at residues 19–26 is G1; it reads GHVDHGKT. A GTP-binding site is contributed by 19-26; it reads GHVDHGKT. A Mg(2+)-binding site is contributed by Thr26. The tract at residues 60-64 is G2; that stretch reads GITIN. Positions 81 to 84 are G3; sequence DCPG. Residues 81–85 and 136–139 contribute to the GTP site; these read DCPGH and NKCD. Residues 136 to 139 are G4; the sequence is NKCD. The interval 174 to 176 is G5; sequence SAL.

Belongs to the TRAFAC class translation factor GTPase superfamily. Classic translation factor GTPase family. EF-Tu/EF-1A subfamily. As to quaternary structure, monomer.

It localises to the cytoplasm. It carries out the reaction GTP + H2O = GDP + phosphate + H(+). Its function is as follows. GTP hydrolase that promotes the GTP-dependent binding of aminoacyl-tRNA to the A-site of ribosomes during protein biosynthesis. This Buchnera aphidicola subsp. Baizongia pistaciae (strain Bp) protein is Elongation factor Tu.